A 511-amino-acid polypeptide reads, in one-letter code: Lysine--tRNA ligase (511 aa).

2 residues coordinate Mg(2+): Glu-421 and Glu-428.

The protein belongs to the class-II aminoacyl-tRNA synthetase family. As to quaternary structure, homodimer. The cofactor is Mg(2+).

It is found in the cytoplasm. It carries out the reaction tRNA(Lys) + L-lysine + ATP = L-lysyl-tRNA(Lys) + AMP + diphosphate. This is Lysine--tRNA ligase from Aeromonas hydrophila subsp. hydrophila (strain ATCC 7966 / DSM 30187 / BCRC 13018 / CCUG 14551 / JCM 1027 / KCTC 2358 / NCIMB 9240 / NCTC 8049).